A 712-amino-acid chain; its full sequence is Ferric reductase transmembrane component 6 (712 aa).

Positions 1–17 (MHRTLLFLTWLISLTKA) are cleaved as a signal peptide. At 18–167 (FNIKLPHTEK…HAHAYNLDIS (150 aa)) the chain is on the vacuolar side. N-linked (GlcNAc...) asparagine glycosylation is found at Asn-89, Asn-112, and Asn-124. A helical membrane pass occupies residues 168–188 (SVYGAYLTYYFVIVGIIAVFF). At 189 to 244 (HMSHYNGLNRALFASRFVNYIRGHFVLPTFLVDKHANHFKFLNVEVFTGLMPNSLE) the chain is on the cytoplasmic side. Residues 245–265 (AWIIFGYTLANIIFLSISYII) form a helical membrane-spanning segment. Topologically, residues 266–287 (DPYNLIFNSHLSQFTRLLADRS) are vacuolar. Positions 287 to 411 (SGILAFTQFP…YCCWQHVKIF (125 aa)) constitute a Ferric oxidoreductase domain. The helical transmembrane segment at 288–308 (GILAFTQFPLIIIFTARNSFL) threads the bilayer. Residues 309-328 (EFLTGVKFNSFISFHKWIGR) lie on the Cytoplasmic side of the membrane. Residues His-323 and His-337 each coordinate heme. A helical membrane pass occupies residues 329–349 (IMVLNATIHSLSYSLFAIINH). The Vacuolar portion of the chain corresponds to 350-360 (AFKISNKQLYW). The helical transmembrane segment at 361–381 (KFGIASITVLCVLLVLSLGIV) threads the bilayer. Over 382-387 (RKRHYE) the chain is Cytoplasmic. Residues 388–408 (FFLYTHIILALLFFYCCWQHV) form a helical membrane-spanning segment. 2 residues coordinate heme: His-393 and His-407. Topologically, residues 409-416 (KIFNGWKE) are vacuolar. The 135-residue stretch at 412–546 (NGWKEWIVVS…EGPYGPSNLH (135 aa)) folds into the FAD-binding FR-type domain. Residues 417–437 (WIVVSLLIWGLEKLFRIWNIL) traverse the membrane as a helical segment. The Cytoplasmic segment spans residues 438 to 712 (QFRFPKATLI…IEYFEEYQCW (275 aa)). 493–499 (HPFTIID) contributes to the FAD binding site. NADP(+) contacts are provided by residues 538-541 (GPYG) and 678-679 (CG).

The protein belongs to the ferric reductase (FRE) family. FAD is required as a cofactor.

Its subcellular location is the vacuole membrane. The enzyme catalyses 2 a Fe(II)-siderophore + NADP(+) + H(+) = 2 a Fe(III)-siderophore + NADPH. Functionally, metalloreductase responsible for reducing vacuolar iron and copper prior to transport into the cytosol. Catalyzes the reduction of Fe(3+) to Fe(2+) and Cu(2+) to Cu(+), respectively, which can then be transported by the respective vacuolar efflux systems to the cytosol. This chain is Ferric reductase transmembrane component 6 (FRE6), found in Saccharomyces cerevisiae (strain ATCC 204508 / S288c) (Baker's yeast).